The sequence spans 391 residues: MAKSKFERTKPHVNIGTIGHVDHGKTSLTAAITKFFGEFKAYDQIDAAPEERARGITISTAHVEYETANRHYAHVDCPGHADYVKNMITGAAQMDGAILVVSAADGPMPQTREHILLARQVGVPAIVVFLNKCDQVDDAELLELVELEVRELLSKYEFPGDEIPIIKGSALAALEDSSKELGEDAIRNLMDAVDSYIPTPERPIDQPFLMPIEDVFSISGRGTVVTGRVERGIVKVGEEVEIVGIKATTKTTVTGVEMFRKLLDQGQAGDNIGALIRGVGREDVERGQVLCKPGSVKPHTKFKAEAYILTKDEGGRHTPFFTNYRPQFYFRTTDVTGVVTLPAGTEMVMPGDNVAMDVTLIVPIAMEEKLRFAIREGGRTVGAGIVSSIIE.

The 192-residue stretch at 10–201 (KPHVNIGTIG…AVDSYIPTPE (192 aa)) folds into the tr-type G domain. Residues 19-26 (GHVDHGKT) are G1. A GTP-binding site is contributed by 19–26 (GHVDHGKT). Thr26 is a Mg(2+) binding site. Residues 55-59 (GITIS) are G2. The G3 stretch occupies residues 76-79 (DCPG). Residues 76-80 (DCPGH) and 131-134 (NKCD) contribute to the GTP site. Positions 131–134 (NKCD) are G4. The G5 stretch occupies residues 169-171 (SAL).

It belongs to the TRAFAC class translation factor GTPase superfamily. Classic translation factor GTPase family. EF-Tu/EF-1A subfamily. In terms of assembly, monomer.

It localises to the cytoplasm. The enzyme catalyses GTP + H2O = GDP + phosphate + H(+). In terms of biological role, GTP hydrolase that promotes the GTP-dependent binding of aminoacyl-tRNA to the A-site of ribosomes during protein biosynthesis. The polypeptide is Elongation factor Tu (Brucella canis (strain ATCC 23365 / NCTC 10854 / RM-666)).